Reading from the N-terminus, the 202-residue chain is Nucleoside triphosphate pyrophosphatase (202 aa).

Asp77 (proton acceptor) is an active-site residue.

The protein belongs to the Maf family. Requires a divalent metal cation as cofactor.

The protein localises to the cytoplasm. It catalyses the reaction a ribonucleoside 5'-triphosphate + H2O = a ribonucleoside 5'-phosphate + diphosphate + H(+). The enzyme catalyses a 2'-deoxyribonucleoside 5'-triphosphate + H2O = a 2'-deoxyribonucleoside 5'-phosphate + diphosphate + H(+). Functionally, nucleoside triphosphate pyrophosphatase. May have a dual role in cell division arrest and in preventing the incorporation of modified nucleotides into cellular nucleic acids. The protein is Nucleoside triphosphate pyrophosphatase of Rickettsia canadensis (strain McKiel).